The primary structure comprises 130 residues: Endoglucanase 2 (130 aa).

Catalysis depends on residues His47, Asp98, and Glu107.

This sequence belongs to the glycosyl hydrolase 9 (cellulase E) family.

The enzyme catalyses Endohydrolysis of (1-&gt;4)-beta-D-glucosidic linkages in cellulose, lichenin and cereal beta-D-glucans.. In terms of biological role, involved in ripening fruit process. The chain is Endoglucanase 2 (CEL2) from Persea americana (Avocado).